Reading from the N-terminus, the 230-residue chain is Ubiquitin carboxyl-terminal hydrolase isozyme L3 (230 aa).

The UCH catalytic domain occupies 5-229 (RWLPLEANPE…LRFNAIALSA (225 aa)). The tract at residues 8–13 (PLEANP) is interaction with ubiquitin. The active-site Nucleophile is Cys95. Ser130 bears the Phosphoserine mark. Positions 152 to 159 (AHEGQTEA) are interaction with ubiquitin. Crossover loop which restricts access of large ubiquitin adducts to the active site. The active-site Proton donor is the His169. Residues 219–224 (ELRFNA) are interaction with ubiquitin.

It belongs to the peptidase C12 family. In terms of assembly, preferentially binds diubiquitin; the interaction does not hydrolyze diubiquitin but, in vitro, inhibits the hydrolyzing activity on other substrates. Highly expressed in heart, skeletal muscle, and testis.

Its subcellular location is the cytoplasm. The catalysed reaction is Thiol-dependent hydrolysis of ester, thioester, amide, peptide and isopeptide bonds formed by the C-terminal Gly of ubiquitin (a 76-residue protein attached to proteins as an intracellular targeting signal).. With respect to regulation, inhibited by monoubiquitin and diubiquitin. Its function is as follows. Deubiquitinating enzyme (DUB) that controls levels of cellular ubiquitin through processing of ubiquitin precursors and ubiquitinated proteins. Thiol protease that recognizes and hydrolyzes a peptide bond at the C-terminal glycine of either ubiquitin or NEDD8. Has a 10-fold preference for Arg and Lys at position P3'', and exhibits a preference towards 'Lys-48'-linked ubiquitin chains. Deubiquitinates ENAC in apical compartments, thereby regulating apical membrane recycling. Indirectly increases the phosphorylation of IGFIR, AKT and FOXO1 and promotes insulin-signaling and insulin-induced adipogenesis. Required for stress-response retinal, skeletal muscle and germ cell maintenance. May be involved in working memory. Can hydrolyze UBB(+1), a mutated form of ubiquitin which is not effectively degraded by the proteasome and is associated with neurogenerative disorders. The chain is Ubiquitin carboxyl-terminal hydrolase isozyme L3 (UCHL3) from Homo sapiens (Human).